The sequence spans 575 residues: Transport inhibitor response 1-like protein Os04g0395600 (575 aa).

An F-box domain is found at methionine 1–valine 45. 1D-myo-inositol hexakisphosphate is bound at residue lysine 69. The interaction with auxin-responsive proteins stretch occupies residues aspartate 76–phenylalanine 77. 1D-myo-inositol hexakisphosphate-binding positions include lysine 108–arginine 109 and arginine 340. The interval proline 343–valine 348 is interaction with auxin-responsive proteins. Arginine 396–arginine 398 lines the 1D-myo-inositol hexakisphosphate pocket. Positions cysteine 400–proline 404 are interaction with auxin-responsive proteins. Arginine 431 provides a ligand contact to 1D-myo-inositol hexakisphosphate. The interaction with auxin-responsive proteins stretch occupies residues alanine 459–phenylalanine 460. Residues arginine 479 to lysine 480 and arginine 504 contribute to the 1D-myo-inositol hexakisphosphate site.

Part of a SCF (SKP1-cullin-F-box) protein ligase complex. May interact with auxin and auxin-responsive proteins.

Its subcellular location is the nucleus. It participates in protein modification; protein ubiquitination. This chain is Transport inhibitor response 1-like protein Os04g0395600, found in Oryza sativa subsp. japonica (Rice).